A 277-amino-acid chain; its full sequence is Formamidopyrimidine-DNA glycosylase (277 aa).

Residue Pro2 is the Schiff-base intermediate with DNA of the active site. Catalysis depends on Glu3, which acts as the Proton donor. The active-site Proton donor; for beta-elimination activity is the Lys58. 3 residues coordinate DNA: His97, Arg116, and Arg158. The segment at 243–277 adopts an FPG-type zinc-finger fold; it reads NVYGRAGAPCPRCGRSIRQRRIAQRSTWYCPGCQR. The active-site Proton donor; for delta-elimination activity is the Arg267.

The protein belongs to the FPG family. In terms of assembly, monomer. Zn(2+) serves as cofactor.

It catalyses the reaction Hydrolysis of DNA containing ring-opened 7-methylguanine residues, releasing 2,6-diamino-4-hydroxy-5-(N-methyl)formamidopyrimidine.. The catalysed reaction is 2'-deoxyribonucleotide-(2'-deoxyribose 5'-phosphate)-2'-deoxyribonucleotide-DNA = a 3'-end 2'-deoxyribonucleotide-(2,3-dehydro-2,3-deoxyribose 5'-phosphate)-DNA + a 5'-end 5'-phospho-2'-deoxyribonucleoside-DNA + H(+). Its function is as follows. Involved in base excision repair of DNA damaged by oxidation or by mutagenic agents. Acts as a DNA glycosylase that recognizes and removes damaged bases. Has a preference for oxidized purines, such as 7,8-dihydro-8-oxoguanine (8-oxoG). Has AP (apurinic/apyrimidinic) lyase activity and introduces nicks in the DNA strand. Cleaves the DNA backbone by beta-delta elimination to generate a single-strand break at the site of the removed base with both 3'- and 5'-phosphates. In Alkalilimnicola ehrlichii (strain ATCC BAA-1101 / DSM 17681 / MLHE-1), this protein is Formamidopyrimidine-DNA glycosylase.